The following is a 221-amino-acid chain: UPF0758 protein YicR (221 aa).

The 123-residue stretch at 99–221 folds into the MPN domain; that stretch reads ALLSPEMTRE…YVSFAERGWI (123 aa). Positions 170, 172, and 183 each coordinate Zn(2+). The short motif at 170 to 183 is the JAMM motif element; sequence HNHPSGCAEPSKAD.

This sequence belongs to the UPF0758 family. YicR subfamily.

The sequence is that of UPF0758 protein YicR from Salmonella newport (strain SL254).